A 228-amino-acid chain; its full sequence is Methyltransferase verB (228 aa).

This sequence belongs to the methyltransferase superfamily.

It participates in secondary metabolite biosynthesis; terpenoid biosynthesis. The protein operates within mycotoxin biosynthesis. Functionally, methyltransferase; part of the gene cluster that mediates the biosynthesis of the neurotoxin verrucosidin, a methylated alpha-pyrone polyketide that inhibits oxidative phosphorylation in mitochondria and thereby causes neurological diseases. The carbon backbone of verrucosidin is synthesized by the HR-PKS verA, and further modified by the other verrucodidin cluster enzymes. The protein is Methyltransferase verB of Penicillium polonicum.